We begin with the raw amino-acid sequence, 338 residues long: ABC transporter I family member 6, chloroplastic (338 aa).

The transit peptide at 1–66 directs the protein to the chloroplast; it reads MAGVNLQLRH…RTTRRSVIVS (66 aa). Residues 92 to 338 enclose the ABC transporter domain; sequence LEVRDLRAVI…EKEGYKAISG (247 aa). Residue 126–133 coordinates ATP; that stretch reads GKNGSGKS.

Belongs to the ABC transporter superfamily. ABCI family. In terms of assembly, interacts with NAP6. In terms of tissue distribution, present in all organs, with higher levels in aerial parts.

It localises to the plastid. Its subcellular location is the chloroplast. Functionally, essential protein. Required during embryo development, especially at early stages. Involved in chloroplast differentiation. This Arabidopsis thaliana (Mouse-ear cress) protein is ABC transporter I family member 6, chloroplastic (ABCI6).